A 318-amino-acid polypeptide reads, in one-letter code: Endochitinase 3 (318 aa).

An N-terminal signal peptide occupies residues 1–18 (EFTIFSLLFSLLLLNASA). The region spanning 19-60 (EQCGSQAGGALCAPGLCCSKFGWCGNTNDYCGPGNCQSQCPG) is the Chitin-binding type-1 domain. 7 cysteine pairs are disulfide-bonded: Cys21–Cys36, Cys30–Cys42, Cys35–Cys49, Cys54–Cys58, Cys89–Cys152, Cys164–Cys172, and Cys271–Cys303. Glu134 (proton donor) is an active-site residue. A propeptide spans 312–318 (GLLVDTV) (removed in mature form, vacuolar targeting).

It belongs to the glycosyl hydrolase 19 family. Chitinase class I subfamily.

Its subcellular location is the vacuole. The enzyme catalyses Random endo-hydrolysis of N-acetyl-beta-D-glucosaminide (1-&gt;4)-beta-linkages in chitin and chitodextrins.. In terms of biological role, defense against chitin-containing fungal pathogens. In Solanum tuberosum (Potato), this protein is Endochitinase 3 (CHTB3).